A 196-amino-acid chain; its full sequence is Holliday junction resolvase RecU (196 aa).

The Mg(2+) site is built by Thr82, Asp84, Glu97, and Gln116.

The protein belongs to the RecU family. It depends on Mg(2+) as a cofactor.

The protein resides in the cytoplasm. The enzyme catalyses Endonucleolytic cleavage at a junction such as a reciprocal single-stranded crossover between two homologous DNA duplexes (Holliday junction).. In terms of biological role, endonuclease that resolves Holliday junction intermediates in genetic recombination. Cleaves mobile four-strand junctions by introducing symmetrical nicks in paired strands. Promotes annealing of linear ssDNA with homologous dsDNA. Required for DNA repair, homologous recombination and chromosome segregation. The sequence is that of Holliday junction resolvase RecU from Oceanobacillus iheyensis (strain DSM 14371 / CIP 107618 / JCM 11309 / KCTC 3954 / HTE831).